The primary structure comprises 356 residues: MSL complex subunit 3B (356 aa).

The region spanning 2 to 350 (EERTVTLEIP…SEVHYSTRNP (349 aa)) is the MRG domain. 2 disordered regions span residues 135–210 (TNRS…WQQD) and 225–247 (KTPV…SPVF). The segment covering 142–156 (LSPSLRLLNPSRPQS) has biased composition (low complexity). Composition is skewed to polar residues over residues 178–189 (AVQSLRRSSPHT) and 229–243 (HSRS…SQEG).

The protein resides in the nucleus. Functionally, probable non-catalytic component of the MSL histone acetyltransferase complex, a multiprotein complex that mediates the majority of histone H4 acetylation at 'Lys-16' (H4K16ac), an epigenetic mark that prevents chromatin compaction. The polypeptide is MSL complex subunit 3B (Homo sapiens (Human)).